Here is a 311-residue protein sequence, read N- to C-terminus: Serine hydrolase-like protein (311 aa).

One can recognise an AB hydrolase-1 domain in the interval 27–227 (PPVLCLHGWL…FVSKEMFVHS (201 aa)). Serine 102 is a catalytic residue. Phosphoserine is present on serine 210.

It belongs to the AB hydrolase superfamily. As to expression, ubiquitous. High protein expression in skeletal and cardiac muscle.

It localises to the cytoplasm. Its subcellular location is the perinuclear region. The protein resides in the peroxisome. Functionally, probable serine hydrolase. May be related to cell muscle hypertrophy. The sequence is that of Serine hydrolase-like protein (Serhl) from Mus musculus (Mouse).